A 197-amino-acid polypeptide reads, in one-letter code: GTP cyclohydrolase-2 (197 aa).

50–54 (RIHSE) contacts GTP. Zn(2+) contacts are provided by Cys55, Cys66, and Cys68. GTP contacts are provided by residues Gln71, 93 to 95 (EGR), and Thr115. Asp127 serves as the catalytic Proton acceptor. Catalysis depends on Arg129, which acts as the Nucleophile. GTP is bound by residues Thr150 and Lys155.

This sequence belongs to the GTP cyclohydrolase II family. Zn(2+) is required as a cofactor.

It carries out the reaction GTP + 4 H2O = 2,5-diamino-6-hydroxy-4-(5-phosphoribosylamino)-pyrimidine + formate + 2 phosphate + 3 H(+). Its pathway is cofactor biosynthesis; riboflavin biosynthesis; 5-amino-6-(D-ribitylamino)uracil from GTP: step 1/4. Functionally, catalyzes the conversion of GTP to 2,5-diamino-6-ribosylamino-4(3H)-pyrimidinone 5'-phosphate (DARP), formate and pyrophosphate. The protein is GTP cyclohydrolase-2 of Tolumonas auensis (strain DSM 9187 / NBRC 110442 / TA 4).